The chain runs to 1061 residues: Error-prone DNA polymerase (1061 aa).

It belongs to the DNA polymerase type-C family. DnaE2 subfamily.

The protein resides in the cytoplasm. It catalyses the reaction DNA(n) + a 2'-deoxyribonucleoside 5'-triphosphate = DNA(n+1) + diphosphate. Functionally, DNA polymerase involved in damage-induced mutagenesis and translesion synthesis (TLS). It is not the major replicative DNA polymerase. In Bdellovibrio bacteriovorus (strain ATCC 15356 / DSM 50701 / NCIMB 9529 / HD100), this protein is Error-prone DNA polymerase.